Here is a 268-residue protein sequence, read N- to C-terminus: Interleukin-1 alpha (268 aa).

Residues 1-112 (MAKVPDLFED…DTEEEIIKPR (112 aa)) constitute a propeptide that is removed on maturation. At Lys82 the chain carries N6-acetyllysine. Residues 82–86 (KKRRL) form a nuclear localization signal (NLS) region. Ser87 bears the Phosphoserine mark. N-linked (GlcNAc...) asparagine glycosylation is found at Asn102 and Asn141.

This sequence belongs to the IL-1 family. Monomer. Interacts with TMED10; the interaction mediates the translocation from the cytoplasm into the ERGIC (endoplasmic reticulum-Golgi intermediate compartment) and thereby secretion. Interacts with IL1R1. Interacts with S100A13; this interaction is the first step in the export of IL1A, followed by direct translocation of this complex across the plasma membrane. Post-translationally, acetylated within its nuclear localization sequence, which impacts subcellular localization. Proteolytic processed by CAPN1 in a calcium-dependent manner. Cleavage from 31 kDa precursor to 18 kDa biologically active molecules. In terms of processing, phosphorylated. Phosphorylation greatly enhances susceptibility to digestion and promotes the conversion of pre-IL1A alpha to the biologically active IL1A.

The protein resides in the nucleus. It localises to the cytoplasm. Its subcellular location is the secreted. Cytokine constitutively present intracellularly in nearly all resting non-hematopoietic cells that plays an important role in inflammation and bridges the innate and adaptive immune systems. After binding to its receptor IL1R1 together with its accessory protein IL1RAP, forms the high affinity interleukin-1 receptor complex. Signaling involves the recruitment of adapter molecules such as MYD88, IRAK1 or IRAK4. In turn, mediates the activation of NF-kappa-B and the three MAPK pathways p38, p42/p44 and JNK pathways. Within the cell, acts as an alarmin and cell death results in its liberation in the extracellular space after disruption of the cell membrane to induce inflammation and alert the host to injury or damage. In addition to its role as a danger signal, which occurs when the cytokine is passively released by cell necrosis, directly senses DNA damage and acts as signal for genotoxic stress without loss of cell integrity. This chain is Interleukin-1 alpha (IL1A), found in Capra hircus (Goat).